The following is a 1010-amino-acid chain: Lysosomal alpha-mannosidase (1010 aa).

Positions 1–22 (MVIKKLFILIFCLFLIINEING) are cleaved as a signal peptide. A propeptide spans 23 to 40 (KKTKINDIKKSKPKLSST) (pro I). Zn(2+) contacts are provided by histidine 51 and aspartate 53. Asparagine 68 is a glycosylation site (N-linked (GlcNAc...) asparagine). Aspartate 173 and histidine 420 together coordinate Zn(2+). Aspartate 173 (nucleophile) is an active-site residue. N-linked (GlcNAc...) asparagine glycosylation is found at asparagine 480, asparagine 520, asparagine 528, asparagine 539, asparagine 623, asparagine 760, asparagine 784, asparagine 828, asparagine 954, and asparagine 963. A propeptide spans 508 to 595 (RNEPVRIPIP…GGGKINEKVS (88 aa)) (pro II).

Belongs to the glycosyl hydrolase 38 family. As to quaternary structure, tetramer of equimolar amounts of 60 and 58 kDa subunits. Zn(2+) serves as cofactor. Post-translationally, first cleaved into the mature 58 kDa subunit and an intermediate 82 kDa subunit. The latter is then cleaved to its mature 60 kDa subunit form. These events occur in multiple intracellular compartments. The 60 kDa subunit may form one or more intramolecular disulfide bonds.

The protein resides in the lysosome. The catalysed reaction is Hydrolysis of terminal, non-reducing alpha-D-mannose residues in alpha-D-mannosides.. This is Lysosomal alpha-mannosidase (manA) from Dictyostelium discoideum (Social amoeba).